Here is a 225-residue protein sequence, read N- to C-terminus: NAD(P)H-quinone oxidoreductase subunit K, chloroplastic (225 aa).

Positions 43, 44, 108, and 139 each coordinate [4Fe-4S] cluster.

It belongs to the complex I 20 kDa subunit family. As to quaternary structure, NDH is composed of at least 16 different subunits, 5 of which are encoded in the nucleus. [4Fe-4S] cluster serves as cofactor.

It is found in the plastid. Its subcellular location is the chloroplast thylakoid membrane. The catalysed reaction is a plastoquinone + NADH + (n+1) H(+)(in) = a plastoquinol + NAD(+) + n H(+)(out). It carries out the reaction a plastoquinone + NADPH + (n+1) H(+)(in) = a plastoquinol + NADP(+) + n H(+)(out). NDH shuttles electrons from NAD(P)H:plastoquinone, via FMN and iron-sulfur (Fe-S) centers, to quinones in the photosynthetic chain and possibly in a chloroplast respiratory chain. The immediate electron acceptor for the enzyme in this species is believed to be plastoquinone. Couples the redox reaction to proton translocation, and thus conserves the redox energy in a proton gradient. The sequence is that of NAD(P)H-quinone oxidoreductase subunit K, chloroplastic from Daucus carota (Wild carrot).